Consider the following 741-residue polypeptide: Ribosome-releasing factor 2, mitochondrial (741 aa).

The transit peptide at 1–29 directs the protein to the mitochondrion; the sequence is MLKYEFLHGLQKRSHYLRQLSGQFFSRSY. The 280-residue stretch at 31–310 folds into the tr-type G domain; it reads SKIRNIGILA…AVNSYLPAPE (280 aa). Residues 40-47, 104-108, and 158-161 each bind GTP; these read AHIDAGKT, DTPGH, and NKMD.

Belongs to the TRAFAC class translation factor GTPase superfamily. Classic translation factor GTPase family. EF-G/EF-2 subfamily.

The protein resides in the mitochondrion. Its function is as follows. Mitochondrial GTPase that mediates the disassembly of ribosomes from messenger RNA at the termination of mitochondrial protein biosynthesis. Not involved in the GTP-dependent ribosomal translocation step during translation elongation. The sequence is that of Ribosome-releasing factor 2, mitochondrial from Drosophila ananassae (Fruit fly).